The primary structure comprises 329 residues: Cytosolic sulfotransferase 6 (329 aa).

74–79 is a binding site for 3'-phosphoadenylyl sulfate; it reads KCGTTW. The active-site Proton acceptor is His140. 3'-phosphoadenylyl sulfate contacts are provided by residues Arg162, Ser170, and 295–297; that span reads RKG.

It belongs to the sulfotransferase 1 family.

It is found in the cytoplasm. Functionally, sulfotransferase that utilizes 3'-phospho-5'-adenylyl sulfate (PAPS) as sulfonate donor. The polypeptide is Cytosolic sulfotransferase 6 (SOT6) (Arabidopsis thaliana (Mouse-ear cress)).